The primary structure comprises 143 residues: MAIYGIGTDLAQVSRIAAVLERTGGRFAEKVLGPDELRVFHARRARSEARGIAFLATRFSAKEAFSKAIGLGMHWPMTWRALQTLNRPSGEPYVVASGELAAWLDARGITARVTVSDERDYAVTFVVAEAPDDVAAARSGAAS.

Residues Asp-9 and Glu-63 each contribute to the Mg(2+) site.

It belongs to the P-Pant transferase superfamily. AcpS family. The cofactor is Mg(2+).

The protein resides in the cytoplasm. The catalysed reaction is apo-[ACP] + CoA = holo-[ACP] + adenosine 3',5'-bisphosphate + H(+). Its function is as follows. Transfers the 4'-phosphopantetheine moiety from coenzyme A to a Ser of acyl-carrier-protein. The polypeptide is Holo-[acyl-carrier-protein] synthase (Burkholderia mallei (strain NCTC 10247)).